The chain runs to 1050 residues: MALYDEDLLKNPFYLALQKWRPDLCSKVAQIHGIVLVPCKGSLSSSIQSTCQFESYILIPVEEHFQTLNGKDVFIQGNRIKLGAGFTCLLSVPILFEETFYNEKEESFSILCIAHPLEKRESSEEPLAPSDPFSLKTIEDVREFLGRHSERFDRNIASFHRTFRECERKSLRHHIDSANALYTKCLQQLLRDSHLKMLAKQEAQMNLMKQAVEIYVHHEIYDLIFKYVGTMEASEDAAFNKITRSLQDLQQKDIGVKPEFSFNIPRAKRELAQLNKCTSPQQKLVCLRKVVQLITQSPSQRVNLETMCADDLLSVLLYLLVKTEIPNWMANLSYIKNFRFSSSAKDELGYCLTSFEAAIEYIRQGSLSAKPPESEGFGDRLFLKQRMSLLSQMTSSPTDCLFKHIASGNQKEVERLLSQEDHDKDAVQKMCHPLCFCDDCEKLVSGRLNDPSVVTPFSRDDRGHTPLHVAALCGQASLIDLLVSKGAVVNATDYHGATPLHLACQKGYQSVTLLLLHYKASAEVQDNNGNTPLHLACTYGHEDCVKALVYYDVESCRLDIGNEKGDTPLHIAARWGYQAIIETLLQNGASPEIQNRLKETPLKCALNSKILSVMEAYHLSFERRQKSSEAPVQSLQRSVDSISQESSTSSFSSMSAGSRQEETKKDYREVEKLLRAVADGDLEMVRYLLEWTEEDLEDAEDTVSAVDPEFCHPLCQCPKCAPAQKRLAKVPASGLGVNVTSQDGSSPLYVAALHGRADLIPLLLKHGANAGARNADQAVPLHLACQQGHFQVVKCLLDSNAKPNKKDLSGNTPLIYACSGGHHEVVALLLQHGAAINTSNNKGNTALHEAVIEKHVFVVELLLLHGASVQVLNKRQRTAVDCAEQNSKIMELLQVVPSCVASLDDVAETDRKEYVTVKIRKKWNSKLYDLPDEPFTRQFYFAHSAGQFKGKTSREIMARDRSVPNLTEGSLHEPGRQSVTLRQNNLPAQSGSHAAEKGNSDWPERPRVTQTGPGHRRMLRRHTVEDAVVSQGPEAAGPLSTPQEVSASRS.

The segment at 1 to 372 (MALYDEDLLK…RQGSLSAKPP (372 aa)) is sufficient for GEF activity towards RAB21. Residues 233–371 (ASEDAAFNKI…IRQGSLSAKP (139 aa)) form the VPS9 domain. ANK repeat units follow at residues 396–426 (SPTD…DKDA), 462–491 (RGHT…VVNA), 495–524 (HGAT…SAEV), 528–560 (NGNT…RLDI), 564–593 (KGDT…SPEI), and 597–627 (LKET…RQKS). The sufficient for interaction with VPS29 stretch occupies residues 396 to 460 (SPTDCLFKHI…PSVVTPFSRD (65 aa)). Positions 451–600 (PSVVTPFSRD…PEIQNRLKET (150 aa)) are interaction with RAB38. The tract at residues 451-730 (PSVVTPFSRD…APAQKRLAKV (280 aa)) is interaction with RAB32. Residues 630 to 665 (APVQSLQRSVDSISQESSTSSFSSMSAGSRQEETKK) form a disordered region. A compositionally biased stretch (low complexity) spans 638–658 (SVDSISQESSTSSFSSMSAGS). The interval 658 to 707 (SRQEETKKDYREVEKLLRAVADGDLEMVRYLLEWTEEDLEDAEDTVSAVD) is required for interaction with VAMP7. 5 ANK repeats span residues 668–698 (REVE…DLED), 743–772 (DGSS…NAGA), 776–805 (DQAV…KPNK), 809–838 (SGNT…AINT), and 842–871 (KGNT…SVQV). The tract at residues 692-746 (TEEDLEDAEDTVSAVDPEFCHPLCQCPKCAPAQKRLAKVPASGLGVNVTSQDGSS) is sufficient for interaction with VPS29. Phosphoserine is present on residues Ser962 and Ser970. The disordered stretch occupies residues 987–1050 (PAQSGSHAAE…TPQEVSASRS (64 aa)). Basic and acidic residues predominate over residues 994 to 1007 (AAEKGNSDWPERPR). Thr1023 carries the post-translational modification Phosphothreonine. The segment covering 1040–1050 (STPQEVSASRS) has biased composition (polar residues).

As to quaternary structure, interacts with RAB21 (GDP-bound form), VPS29, KIF5A, KIF5C, GOLGA4. Interacts with RAB32 (GTP-bound form), RAB38 (GTP-bound form), VAMP7. Interacts with low affinity with RAB5. ANKRD27:RAB32 heterodimers can homodimerize to form tetramers. Can interact with RAB38 or RAB32, VPS29 and VAMP7 simultaneously. A decreased interaction with RAB32 seen in the presence of SGSM2.

It is found in the early endosome. The protein localises to the late endosome. The protein resides in the cytoplasmic vesicle membrane. It localises to the lysosome. Its subcellular location is the cell membrane. It is found in the melanosome. May be a guanine exchange factor (GEF) for Rab21, Rab32 and Rab38 and regulate endosome dynamics. May regulate the participation of VAMP7 in membrane fusion events; in vitro inhibits VAMP7-mediated SNARE complex formation by trapping VAMP7 in a closed, fusogenically inactive conformation. Involved in peripheral melanosomal distribution of TYRP1 in melanocytes; the function, which probably is implicating vesicle-trafficking, includes cooperation with Rab32, Rab38 and VAMP7. Involved in the regulation of neurite growth; the function seems to require its GEF activity, probably towards Rab21, and VAMP7 but not Rab32/38. Proposed to be involved in Golgi sorting of VAMP7 and transport of VAMP7 vesicles to the cell surface; the function seems to implicate kinesin heavy chain isoform 5 proteins, GOLGA4, RAB21 and MACF1. Required for the colocalization of VAMP7 and Rab21, probably on TGN sites. Involved in GLUT1 endosome-to-plasma membrane trafficking; the function is dependent of association with VPS29. Regulates the proper trafficking of melanogenic enzymes TYR, TYRP1 and DCT/TYRP2 to melanosomes in melanocytes. This Pongo abelii (Sumatran orangutan) protein is Ankyrin repeat domain-containing protein 27 (ANKRD27).